A 103-amino-acid polypeptide reads, in one-letter code: Large ribosomal subunit protein uL24 (103 aa).

The protein belongs to the universal ribosomal protein uL24 family. As to quaternary structure, part of the 50S ribosomal subunit.

One of two assembly initiator proteins, it binds directly to the 5'-end of the 23S rRNA, where it nucleates assembly of the 50S subunit. Its function is as follows. One of the proteins that surrounds the polypeptide exit tunnel on the outside of the subunit. The sequence is that of Large ribosomal subunit protein uL24 from Sinorhizobium fredii (strain NBRC 101917 / NGR234).